A 64-amino-acid polypeptide reads, in one-letter code: Potassium channel toxin kappa-KTx 4.1 (64 aa).

Residues 1–26 (MKSTLMTASLLILVVLFIIDYASVYA) form the signal peptide. The propeptide occupies 27–38 (EFIDGEISLERE). 2 disulfides stabilise this stretch: cysteine 43–cysteine 61 and cysteine 47–cysteine 57.

The protein belongs to the short scorpion toxin superfamily. Potassium channel inhibitor kappa-KTx family. Kappa-KTx 4 subfamily. Expressed by the venom gland.

The protein resides in the secreted. Functionally, potassium channel inhibitor (Kv). This chain is Potassium channel toxin kappa-KTx 4.1, found in Heterometrus petersii (Asian forest scorpion).